A 256-amino-acid polypeptide reads, in one-letter code: Na(+)-translocating NADH-quinone reductase subunit C (256 aa).

The chain crosses the membrane as a helical span at residues 12–32 (LGVVIGLSLVCSIIVSTAAVG). An FMN phosphoryl threonine modification is found at Thr-224.

This sequence belongs to the NqrC family. As to quaternary structure, composed of six subunits; NqrA, NqrB, NqrC, NqrD, NqrE and NqrF. It depends on FMN as a cofactor.

It localises to the cell inner membrane. It catalyses the reaction a ubiquinone + n Na(+)(in) + NADH + H(+) = a ubiquinol + n Na(+)(out) + NAD(+). With respect to regulation, this reaction is tightly coupled to the Na(+) pumping activity and specifically requires Na(+) for activity. Inhibited by korormicin and 2-N-heptyl-4-hydroxyquinoline N-oxide (HQNO). In terms of biological role, NQR complex catalyzes the reduction of ubiquinone-1 to ubiquinol by two successive reactions, coupled with the transport of Na(+) ions from the cytoplasm to the periplasm. NqrA to NqrE are probably involved in the second step, the conversion of ubisemiquinone to ubiquinol. This is Na(+)-translocating NADH-quinone reductase subunit C from Vibrio alginolyticus.